We begin with the raw amino-acid sequence, 800 residues long: DNA topoisomerase 4 subunit A (800 aa).

Residues 31–495 (LPDVRDGLKP…EIEEIKIDKE (465 aa)) enclose the Topo IIA-type catalytic domain. The active-site O-(5'-phospho-DNA)-tyrosine intermediate is the Tyr-119.

This sequence belongs to the type II topoisomerase GyrA/ParC subunit family. ParC type 2 subfamily. In terms of assembly, heterotetramer composed of ParC and ParE.

It is found in the cell membrane. The catalysed reaction is ATP-dependent breakage, passage and rejoining of double-stranded DNA.. Its function is as follows. Topoisomerase IV is essential for chromosome segregation. It relaxes supercoiled DNA. Performs the decatenation events required during the replication of a circular DNA molecule. This Staphylococcus aureus (strain N315) protein is DNA topoisomerase 4 subunit A.